A 326-amino-acid polypeptide reads, in one-letter code: Olfactory receptor 8A1 (326 aa).

Residues Met-1–Phe-45 are Extracellular-facing. A glycan (N-linked (GlcNAc...) asparagine) is linked at Asn-22. A helical membrane pass occupies residues Leu-46–Ile-66. Residues Cys-67 to Tyr-77 are Cytoplasmic-facing. The chain crosses the membrane as a helical span at residues Tyr-78–Val-100. Residues Asn-101–Ser-116 are Extracellular-facing. A disulfide bridge connects residues Cys-114 and Cys-195. Residues Gln-117–Tyr-137 form a helical membrane-spanning segment. Over Asp-138–Asn-150 the chain is Cytoplasmic. A helical membrane pass occupies residues Ile-151 to Ile-171. Residues Gly-172 to Asn-222 lie on the Extracellular side of the membrane. Residues Ile-223 to Gly-243 form a helical membrane-spanning segment. Over Ile-244–His-260 the chain is Cytoplasmic. Residues Leu-261–Ile-281 traverse the membrane as a helical segment. The Extracellular segment spans residues Ser-282–Glu-287. A helical transmembrane segment spans residues Asn-288–Leu-308. Residues Arg-309–Phe-326 are Cytoplasmic-facing.

The protein belongs to the G-protein coupled receptor 1 family.

Its subcellular location is the cell membrane. Functionally, odorant receptor. The chain is Olfactory receptor 8A1 (OR8A1) from Homo sapiens (Human).